The chain runs to 306 residues: Acetylglutamate kinase (306 aa).

Substrate-binding positions include 75 to 76 (GG), arginine 97, and asparagine 197.

Belongs to the acetylglutamate kinase family. ArgB subfamily.

It localises to the cytoplasm. The enzyme catalyses N-acetyl-L-glutamate + ATP = N-acetyl-L-glutamyl 5-phosphate + ADP. Its pathway is amino-acid biosynthesis; L-arginine biosynthesis; N(2)-acetyl-L-ornithine from L-glutamate: step 2/4. In terms of biological role, catalyzes the ATP-dependent phosphorylation of N-acetyl-L-glutamate. This is Acetylglutamate kinase from Streptomyces coelicolor (strain ATCC BAA-471 / A3(2) / M145).